The sequence spans 153 residues: D-aminoacyl-tRNA deacylase (153 aa).

A Gly-cisPro motif, important for rejection of L-amino acids motif is present at residues 137-138 (GP).

Belongs to the DTD family. As to quaternary structure, homodimer.

The protein localises to the cytoplasm. The enzyme catalyses glycyl-tRNA(Ala) + H2O = tRNA(Ala) + glycine + H(+). The catalysed reaction is a D-aminoacyl-tRNA + H2O = a tRNA + a D-alpha-amino acid + H(+). Functionally, an aminoacyl-tRNA editing enzyme that deacylates mischarged D-aminoacyl-tRNAs. Also deacylates mischarged glycyl-tRNA(Ala), protecting cells against glycine mischarging by AlaRS. Acts via tRNA-based rather than protein-based catalysis; rejects L-amino acids rather than detecting D-amino acids in the active site. By recycling D-aminoacyl-tRNA to D-amino acids and free tRNA molecules, this enzyme counteracts the toxicity associated with the formation of D-aminoacyl-tRNA entities in vivo and helps enforce protein L-homochirality. This chain is D-aminoacyl-tRNA deacylase, found in Herpetosiphon aurantiacus (strain ATCC 23779 / DSM 785 / 114-95).